The sequence spans 248 residues: 2,3-bisphosphoglycerate-dependent phosphoglycerate mutase (248 aa).

Substrate contacts are provided by residues 8 to 15 (RHGESLWN), 21 to 22 (TG), arginine 60, 87 to 90 (EKHY), lysine 98, 114 to 115 (RR), and 183 to 184 (GN). Histidine 9 functions as the Tele-phosphohistidine intermediate in the catalytic mechanism. The active-site Proton donor/acceptor is glutamate 87.

It belongs to the phosphoglycerate mutase family. BPG-dependent PGAM subfamily.

It carries out the reaction (2R)-2-phosphoglycerate = (2R)-3-phosphoglycerate. The protein operates within carbohydrate degradation; glycolysis; pyruvate from D-glyceraldehyde 3-phosphate: step 3/5. Functionally, catalyzes the interconversion of 2-phosphoglycerate and 3-phosphoglycerate. This Porphyromonas gingivalis (strain ATCC 33277 / DSM 20709 / CIP 103683 / JCM 12257 / NCTC 11834 / 2561) protein is 2,3-bisphosphoglycerate-dependent phosphoglycerate mutase.